Here is a 599-residue protein sequence, read N- to C-terminus: Zinc metalloproteinase dpy-31 (599 aa).

The signal sequence occupies residues 1 to 22; sequence MALLKPFLSRTFSSFFATITGG. Residues 23–211 constitute a propeptide that is removed on maturation; that stretch reads RNLIDSIEEL…IQHGRRTKRK (189 aa). The 200-residue stretch at 211–410 folds into the Peptidase M12A domain; that stretch reads KFIRSELRRW…IRLMNVIYCS (200 aa). Asparagine 251 is a glycosylation site (N-linked (GlcNAc...) asparagine). 5 disulfides stabilise this stretch: cysteine 254-cysteine 409, cysteine 277-cysteine 298, cysteine 413-cysteine 433, cysteine 435-cysteine 444, and cysteine 455-cysteine 483. Histidine 306 serves as a coordination point for Zn(2+). The active site involves glutamate 307. Histidine 310 and histidine 316 together coordinate Zn(2+). The region spanning 405–445 is the EGF-like domain; sequence NVIYCSDSCAQKLPCQRGGYTDPRRCGRCRCPDGFTGKLCE. In terms of domain architecture, CUB spans 455-571; sequence CGGRIELTSS…KGFQAQVRAL (117 aa). A glycan (N-linked (GlcNAc...) asparagine) is linked at asparagine 522.

Zn(2+) is required as a cofactor.

Its subcellular location is the secreted. Its activity is regulated as follows. Inhibited by marimastat and tripeptide hydroxamic acids. Functionally, metalloprotease which cleaves the carboxyl terminus of procollagens to mature collagens. Probably involved in cuticular collagen maturation. In Brugia malayi (Filarial nematode worm), this protein is Zinc metalloproteinase dpy-31.